The sequence spans 509 residues: Probable cytochrome P450 519B1 (509 aa).

The helical transmembrane segment at 1 to 21 threads the bilayer; that stretch reads MNLINLILYFILFWIVFDFIR. Cysteine 456 provides a ligand contact to heme.

Belongs to the cytochrome P450 family. The cofactor is heme.

Its subcellular location is the membrane. The protein is Probable cytochrome P450 519B1 (cyp519B1) of Dictyostelium discoideum (Social amoeba).